The following is a 149-amino-acid chain: Transcriptional repressor NrdR (149 aa).

A zinc finger lies at 3–34 (CPFCGNLETQVVETRVSEDADFIRRRRQCGAC). The 91-residue stretch at 49-139 (PAIVKKDGRR…VYRSFEDIDE (91 aa)) folds into the ATP-cone domain.

This sequence belongs to the NrdR family. It depends on Zn(2+) as a cofactor.

Negatively regulates transcription of bacterial ribonucleotide reductase nrd genes and operons by binding to NrdR-boxes. The sequence is that of Transcriptional repressor NrdR from Polaromonas sp. (strain JS666 / ATCC BAA-500).